A 320-amino-acid polypeptide reads, in one-letter code: Ferrochelatase (320 aa).

Positions 194 and 275 each coordinate Fe cation.

The protein belongs to the ferrochelatase family. In terms of assembly, monomer.

The protein resides in the cytoplasm. It catalyses the reaction heme b + 2 H(+) = protoporphyrin IX + Fe(2+). It participates in porphyrin-containing compound metabolism; protoheme biosynthesis; protoheme from protoporphyrin-IX: step 1/1. Functionally, catalyzes the ferrous insertion into protoporphyrin IX. The polypeptide is Ferrochelatase (Escherichia coli O139:H28 (strain E24377A / ETEC)).